An 827-amino-acid chain; its full sequence is Protein Jade-1 (827 aa).

The segment at 1–35 (MKRVCLPSSSEDSDDNGSLSTSWSQHSRSLPSFRH) is disordered. Residues 16 to 30 (NGSLSTSWSQHSRSL) show a composition bias toward polar residues. The PHD-type 1 zinc-finger motif lies at 200 to 250 (DVVCDVCQSPDGEDGNEMVFCDKCNICVHQACYGILKVPEGSWLCRTCALG). Residues 252-286 (QPKCLLCPKKGGAMKPTRSGTKWVHVSCALWIPEV) form a C2HC pre-PHD-type zinc finger. A PHD-type 2 zinc finger spans residues 310-366 (LLCSLCNEKVGACIQCSIKNCRTAFHVTCAFDHGLEMKTILTQEDEVKFKSYCPKHG). 2 disordered regions span residues 622–705 (TVAK…SSSL) and 769–810 (RTKE…SSSS). Basic and acidic residues-rich tracts occupy residues 646–661 (SRTQGDTKFDSKEKPL) and 669–682 (KHTEPPERPAEKKR). The segment covering 692–705 (ATASSNKKQCSSSL) has biased composition (polar residues).

It belongs to the JADE family. In terms of assembly, component of the HBO1 complex composed.

Its subcellular location is the nucleus. It is found in the chromosome. It localises to the cytoplasm. The protein localises to the cytoskeleton. The protein resides in the cilium basal body. Its function is as follows. Scaffold subunit of some HBO1 complexes, which have a histone H4 acetyltransferase activity. Plays a key role in HBO1 complex by directing KAT7/HBO1 specificity towards histone H4 acetylation (H4K5ac, H4K8ac and H4K12ac), regulating DNA replication initiation, regulating DNA replication initiation. The polypeptide is Protein Jade-1 (jade1) (Xenopus laevis (African clawed frog)).